A 143-amino-acid polypeptide reads, in one-letter code: Transcriptional regulator MraZ (143 aa).

SpoVT-AbrB domains are found at residues 5–47 (EYNH…SMDE) and 76–119 (ATEC…SSDQ).

Belongs to the MraZ family. As to quaternary structure, forms oligomers.

The protein localises to the cytoplasm. The protein resides in the nucleoid. This is Transcriptional regulator MraZ from Alkaliphilus metalliredigens (strain QYMF).